The primary structure comprises 307 residues: Thiamine-monophosphate kinase (307 aa).

Mg(2+) contacts are provided by D26, T37, T38, and D39. Position 46 (H46) interacts with substrate. Mg(2+) contacts are provided by D68 and D117. Residues 116 to 117 and R140 each bind ATP; that span reads GD. D207 is a Mg(2+) binding site. T209 lines the ATP pocket. D210 contributes to the Mg(2+) binding site. Substrate is bound by residues E254 and F304.

It belongs to the thiamine-monophosphate kinase family.

The catalysed reaction is thiamine phosphate + ATP = thiamine diphosphate + ADP. Its pathway is cofactor biosynthesis; thiamine diphosphate biosynthesis; thiamine diphosphate from thiamine phosphate: step 1/1. Its function is as follows. Catalyzes the ATP-dependent phosphorylation of thiamine-monophosphate (TMP) to form thiamine-pyrophosphate (TPP), the active form of vitamin B1. The polypeptide is Thiamine-monophosphate kinase (Leptospira interrogans serogroup Icterohaemorrhagiae serovar Lai (strain 56601)).